Consider the following 277-residue polypeptide: Small ribosomal subunit protein uS2 (277 aa).

Residues Ala-255–Gly-277 are disordered. Over residues Ala-257–Gly-277 the composition is skewed to low complexity.

It belongs to the universal ribosomal protein uS2 family.

The chain is Small ribosomal subunit protein uS2 from Mycobacteroides abscessus (strain ATCC 19977 / DSM 44196 / CCUG 20993 / CIP 104536 / JCM 13569 / NCTC 13031 / TMC 1543 / L948) (Mycobacterium abscessus).